The following is a 343-amino-acid chain: D-beta-hydroxybutyrate dehydrogenase, mitochondrial (343 aa).

The N-terminal 46 residues, 1-46 (MLAARLSRPLSQLPGKALSVCDRENGTRHTLLFYPASFSPDTRRTY), are a transit peptide targeting the mitochondrion. Residue 59-83 (LVTGCDSGFGFSLAKHLHSKGFLVF) participates in NAD(+) binding. K73 carries the N6-acetyllysine modification. K103 carries the N6-acetyllysine; alternate modification. An N6-succinyllysine; alternate modification is found at K103. K132 and K177 each carry N6-acetyllysine. S195 provides a ligand contact to substrate. Y208 acts as the Proton acceptor in catalysis. K212 carries the N6-acetyllysine modification. Residue S219 is glycosylated (O-linked (GlcNAc) serine). Position 246 is a phosphoserine (S246). Residue K258 is modified to N6-acetyllysine. Residue K259 is modified to N6-acetyllysine; alternate. K259 is subject to N6-succinyllysine; alternate. K280 bears the N6-acetyllysine mark.

The protein belongs to the short-chain dehydrogenases/reductases (SDR) family. Homotetramer. As to expression, expressed in liver.

It localises to the mitochondrion inner membrane. It is found in the mitochondrion matrix. The enzyme catalyses (R)-3-hydroxybutanoate + NAD(+) = acetoacetate + NADH + H(+). With respect to regulation, requires phosphatidylcholine as an allosteric activator for enzymatic activity. The sequence is that of D-beta-hydroxybutyrate dehydrogenase, mitochondrial from Rattus norvegicus (Rat).